The chain runs to 260 residues: Hemin import ATP-binding protein HmuV (260 aa).

The region spanning 7 to 243 (IQASNISVTF…ERIEQVYGYS (237 aa)) is the ABC transporter domain. 39-46 (GPNGAGKS) contributes to the ATP binding site.

This sequence belongs to the ABC transporter superfamily. Heme (hemin) importer (TC 3.A.1.14.5) family. In terms of assembly, the complex is composed of two ATP-binding proteins (HmuV), two transmembrane proteins (HmuU) and a solute-binding protein (HmuT).

The protein localises to the cell inner membrane. Functionally, part of the ABC transporter complex HmuTUV involved in hemin import. Responsible for energy coupling to the transport system. The protein is Hemin import ATP-binding protein HmuV of Vibrio anguillarum (strain ATCC 68554 / 775) (Listonella anguillarum).